We begin with the raw amino-acid sequence, 228 residues long: Large ribosomal subunit protein uL3 (228 aa).

Residues 157-176 form a disordered region; sequence CHRHAGGTGMSASPSRTFKG.

The protein belongs to the universal ribosomal protein uL3 family. As to quaternary structure, part of the 50S ribosomal subunit. Forms a cluster with proteins L14 and L19.

One of the primary rRNA binding proteins, it binds directly near the 3'-end of the 23S rRNA, where it nucleates assembly of the 50S subunit. This Rhodopirellula baltica (strain DSM 10527 / NCIMB 13988 / SH1) protein is Large ribosomal subunit protein uL3.